The chain runs to 392 residues: Phospho-N-acetylmuramoyl-pentapeptide-transferase (392 aa).

The next 10 helical transmembrane spans lie at Arg-28–Ile-48, Thr-74–Phe-94, Phe-100–Trp-120, Tyr-137–Glu-157, Val-193–Ala-213, Gly-225–Thr-245, Ser-262–Phe-282, Val-289–Ile-309, Ile-314–Val-334, and Gln-369–Leu-389.

Belongs to the glycosyltransferase 4 family. MraY subfamily. Requires Mg(2+) as cofactor.

It localises to the cell inner membrane. The enzyme catalyses UDP-N-acetyl-alpha-D-muramoyl-L-alanyl-gamma-D-glutamyl-meso-2,6-diaminopimeloyl-D-alanyl-D-alanine + di-trans,octa-cis-undecaprenyl phosphate = di-trans,octa-cis-undecaprenyl diphospho-N-acetyl-alpha-D-muramoyl-L-alanyl-D-glutamyl-meso-2,6-diaminopimeloyl-D-alanyl-D-alanine + UMP. The protein operates within cell wall biogenesis; peptidoglycan biosynthesis. Functionally, catalyzes the initial step of the lipid cycle reactions in the biosynthesis of the cell wall peptidoglycan: transfers peptidoglycan precursor phospho-MurNAc-pentapeptide from UDP-MurNAc-pentapeptide onto the lipid carrier undecaprenyl phosphate, yielding undecaprenyl-pyrophosphoryl-MurNAc-pentapeptide, known as lipid I. This is Phospho-N-acetylmuramoyl-pentapeptide-transferase from Variovorax paradoxus (strain S110).